Here is a 432-residue protein sequence, read N- to C-terminus: Ribosomal protein uS12 methylthiotransferase RimO (432 aa).

One can recognise an MTTase N-terminal domain in the interval 2–115 (IRVAVITLGC…LPEIINRVLK (114 aa)). Residues C11, C47, C78, C151, C155, and C158 each contribute to the [4Fe-4S] cluster site. Residues 137 to 367 (EDGKPFAYLK…MLHQQSITRA (231 aa)) form the Radical SAM core domain.

This sequence belongs to the methylthiotransferase family. RimO subfamily. The cofactor is [4Fe-4S] cluster.

It is found in the cytoplasm. The enzyme catalyses L-aspartate(89)-[ribosomal protein uS12]-hydrogen + (sulfur carrier)-SH + AH2 + 2 S-adenosyl-L-methionine = 3-methylsulfanyl-L-aspartate(89)-[ribosomal protein uS12]-hydrogen + (sulfur carrier)-H + 5'-deoxyadenosine + L-methionine + A + S-adenosyl-L-homocysteine + 2 H(+). In terms of biological role, catalyzes the methylthiolation of an aspartic acid residue of ribosomal protein uS12. The chain is Ribosomal protein uS12 methylthiotransferase RimO from Moorella thermoacetica (strain ATCC 39073 / JCM 9320).